Consider the following 381-residue polypeptide: NF-kappa-B inhibitor-like protein 1 (381 aa).

Residues 1 to 34 (MSNPSPQVPEEEASTSVCRPKSSMASTSRRQRRE) are disordered. ANK repeat units follow at residues 64–93 (GQPPPLHRACARHDAPALCLLLRLGADPAH) and 97–130 (HGDTALHAAARQGPDAYTDFFLPLLSRCPSAMGI). Disordered stretches follow at residues 129–167 (GIKNKDGETPGQILGWGPPWDSAEEEEEDDASKEREWRQ) and 186–294 (GDAS…RGSL). Phosphoserine is present on Ser150. The span at 150 to 159 (SAEEEEEDDA) shows a compositional bias: acidic residues. Basic and acidic residues-rich tracts occupy residues 218 to 228 (REAEGSRRPPR) and 238 to 287 (QQEE…EHPR).

As to quaternary structure, interacts with CACTIN (via N-terminal domain); the interaction occurs in a proinflammatory-independent manner. In terms of tissue distribution, detected in different cell types including monocytes, T-cells, B-cells and hepatocytes.

It localises to the nucleus. Functionally, involved in the regulation of innate immune response. Acts as negative regulator of Toll-like receptor and interferon-regulatory factor (IRF) signaling pathways. Contributes to the negative regulation of transcriptional activation of NF-kappa-B target genes in response to endogenous proinflammatory stimuli. This is NF-kappa-B inhibitor-like protein 1 (NFKBIL1) from Homo sapiens (Human).